The primary structure comprises 498 residues: Glycerol kinase (498 aa).

Thr12 lines the ADP pocket. ATP is bound by residues Thr12, Thr13, and Ser14. Thr12 lines the sn-glycerol 3-phosphate pocket. Arg16 is an ADP binding site. The sn-glycerol 3-phosphate site is built by Arg82, Glu83, Tyr134, and Asp243. Glycerol-binding residues include Arg82, Glu83, Tyr134, Asp243, and Gln244. ADP contacts are provided by Thr265 and Gly308. The ATP site is built by Thr265, Gly308, Gln312, and Gly411. An ADP-binding site is contributed by Gly411.

The protein belongs to the FGGY kinase family.

It catalyses the reaction glycerol + ATP = sn-glycerol 3-phosphate + ADP + H(+). The protein operates within polyol metabolism; glycerol degradation via glycerol kinase pathway; sn-glycerol 3-phosphate from glycerol: step 1/1. With respect to regulation, inhibited by fructose 1,6-bisphosphate (FBP). In terms of biological role, key enzyme in the regulation of glycerol uptake and metabolism. Catalyzes the phosphorylation of glycerol to yield sn-glycerol 3-phosphate. This Brucella canis (strain ATCC 23365 / NCTC 10854 / RM-666) protein is Glycerol kinase.